Consider the following 307-residue polypeptide: MRIVFAGTPDFAVPSLRSVTQRADVVAVYTQPDRPAGRGRELMPSPVKLEAVARGLPVYQPQTLRSPEVLEQLRALRPDLIVVVAYGVILPEAVLTIPDDGCWNVHASLLPRWRGAAPIQRAIEAGDTETGVCLMQMEAGLDTGPVLMSLKTPINAHETSGQLHDRLAEMGAQLLSDGLGLLRAGLRPVPQPQLAVGVTYAHKLGKVESRLDWEQPAERLACRVRAFQPWPVAEVVLSGERVRIHEALALDLDHSQPPGTVLAASKEGIDVACVQGALRLCRLQREGGKAITVADYLNARRDLQVRA.

Ser108–Pro111 is a binding site for (6S)-5,6,7,8-tetrahydrofolate.

This sequence belongs to the Fmt family.

The enzyme catalyses L-methionyl-tRNA(fMet) + (6R)-10-formyltetrahydrofolate = N-formyl-L-methionyl-tRNA(fMet) + (6S)-5,6,7,8-tetrahydrofolate + H(+). Its function is as follows. Attaches a formyl group to the free amino group of methionyl-tRNA(fMet). The formyl group appears to play a dual role in the initiator identity of N-formylmethionyl-tRNA by promoting its recognition by IF2 and preventing the misappropriation of this tRNA by the elongation apparatus. The chain is Methionyl-tRNA formyltransferase from Xylella fastidiosa (strain M23).